Consider the following 167-residue polypeptide: Phospholipase A and acyltransferase 1 (167 aa).

At 1–138 (MAVNDCFSLT…GEGVSEQANR (138 aa)) the chain is on the cytoplasmic side. An LRAT domain is found at 20-135 (LIEVFRPCYQ…LRYGEGVSEQ (116 aa)). The active site involves H30. Catalysis depends on C119, which acts as the Acyl-thioester intermediate. The helical transmembrane segment at 139–159 (AIGTIGLVAAGIDIFTFLGLF) threads the bilayer. Topologically, residues 160–167 (PKRQGAKS) are lumenal.

It belongs to the H-rev107 family.

It localises to the membrane. The protein resides in the cytoplasm. Its subcellular location is the nucleus. It carries out the reaction a 1,2-diacyl-sn-glycero-3-phosphocholine + H2O = a 1-acyl-sn-glycero-3-phosphocholine + a fatty acid + H(+). The catalysed reaction is a 1,2-diacyl-sn-glycero-3-phosphocholine + H2O = a 2-acyl-sn-glycero-3-phosphocholine + a fatty acid + H(+). It catalyses the reaction 1,2-dihexadecanoyl-sn-glycero-3-phosphocholine + H2O = 2-hexadecanoyl-sn-glycero-3-phosphocholine + hexadecanoate + H(+). The enzyme catalyses 1,2-dihexadecanoyl-sn-glycero-3-phosphocholine + H2O = 1-hexadecanoyl-sn-glycero-3-phosphocholine + hexadecanoate + H(+). It carries out the reaction 1-hexadecanoyl-2-(5Z,8Z,11Z,14Z-eicosatetraenoyl)-sn-glycero-3-phosphoethanolamine + H2O = 2-(5Z,8Z,11Z,14Z)-eicosatetraenoyl-sn-glycero-3-phosphoethanolamine + hexadecanoate + H(+). The catalysed reaction is 1-hexadecanoyl-2-(5Z,8Z,11Z,14Z-eicosatetraenoyl)-sn-glycero-3-phosphoethanolamine + H2O = 1-hexadecanoyl-sn-glycero-3-phosphoethanolamine + (5Z,8Z,11Z,14Z)-eicosatetraenoate + H(+). It catalyses the reaction 1,2-di-(9Z-octadecenoyl)-sn-glycero-3-phosphoethanolamine + 1,2-dihexadecanoyl-sn-glycero-3-phosphocholine = hexadecanoyl-sn-glycero-3-phosphocholine + N-hexadecanoyl-1,2-di-(9Z-octadecenoyl)-sn-glycero-3-phosphoethanolamine + H(+). The enzyme catalyses 1,2-dihexadecanoyl-sn-glycero-3-phosphocholine + a 2-acyl-sn-glycero-3-phosphocholine = a 1-hexadecanoyl-2-acyl-sn-glycero-3-phosphocholine + 2-hexadecanoyl-sn-glycero-3-phosphocholine. Functionally, exhibits both phospholipase A1/2 and acyltransferase activities. Shows phospholipase A1 (PLA1) and A2 (PLA2) activity, catalyzing the calcium-independent release of fatty acids from the sn-1 or sn-2 position of glycerophospholipids. Shows O-acyltransferase activity, catalyzing the transfer of a fatty acyl group from glycerophospholipid to the hydroxyl group of lysophospholipid. This Rattus norvegicus (Rat) protein is Phospholipase A and acyltransferase 1.